The following is a 313-amino-acid chain: Homoserine O-succinyltransferase (313 aa).

The Acyl-thioester intermediate role is filled by cysteine 142. Lysine 163 and serine 192 together coordinate substrate. Residue histidine 235 is the Proton acceptor of the active site. Glutamate 237 is an active-site residue. Arginine 249 is a substrate binding site.

This sequence belongs to the MetA family.

It localises to the cytoplasm. The enzyme catalyses L-homoserine + succinyl-CoA = O-succinyl-L-homoserine + CoA. Its pathway is amino-acid biosynthesis; L-methionine biosynthesis via de novo pathway; O-succinyl-L-homoserine from L-homoserine: step 1/1. In terms of biological role, transfers a succinyl group from succinyl-CoA to L-homoserine, forming succinyl-L-homoserine. This is Homoserine O-succinyltransferase from Vibrio vulnificus (strain YJ016).